We begin with the raw amino-acid sequence, 408 residues long: CCA-adding enzyme (408 aa).

ATP is bound by residues Gly-8 and Arg-11. Positions 8 and 11 each coordinate CTP. Mg(2+)-binding residues include Glu-21 and Asp-23. ATP is bound by residues Arg-91, Arg-137, and Arg-140. CTP-binding residues include Arg-91, Arg-137, and Arg-140. An HD domain is found at 226–329 (TGYYTMTTLS…MTLFHVFDCW (104 aa)).

This sequence belongs to the tRNA nucleotidyltransferase/poly(A) polymerase family. Bacterial CCA-adding enzyme type 2 subfamily. Mg(2+) serves as cofactor.

The enzyme catalyses a tRNA precursor + 2 CTP + ATP = a tRNA with a 3' CCA end + 3 diphosphate. The catalysed reaction is a tRNA with a 3' CCA end + 2 CTP + ATP = a tRNA with a 3' CCACCA end + 3 diphosphate. Its function is as follows. Catalyzes the addition and repair of the essential 3'-terminal CCA sequence in tRNAs without using a nucleic acid template. Adds these three nucleotides in the order of C, C, and A to the tRNA nucleotide-73, using CTP and ATP as substrates and producing inorganic pyrophosphate. tRNA 3'-terminal CCA addition is required both for tRNA processing and repair. Also involved in tRNA surveillance by mediating tandem CCA addition to generate a CCACCA at the 3' terminus of unstable tRNAs. While stable tRNAs receive only 3'-terminal CCA, unstable tRNAs are marked with CCACCA and rapidly degraded. In Blochmanniella pennsylvanica (strain BPEN), this protein is CCA-adding enzyme.